The chain runs to 366 residues: Sigma54-dependent transcriptional activator SfnR (366 aa).

The region spanning 21-250 (QVFEDPRSQA…LENVIHHSLL (230 aa)) is the Sigma-54 factor interaction domain. ATP-binding positions include 49 to 56 (GETGTGKE) and 112 to 121 (ANGGTLFLDE).

Functionally, involved in the dimethyl sulfide degradation pathway. Activates the expression of sfnG and sfnF. This Pseudomonas putida (Arthrobacter siderocapsulatus) protein is Sigma54-dependent transcriptional activator SfnR.